The primary structure comprises 505 residues: Glycerol kinase 3 (505 aa).

Thr-12 serves as a coordination point for ADP. ATP-binding residues include Thr-12, Thr-13, and Ser-14. Residue Thr-12 coordinates sn-glycerol 3-phosphate. Arg-16 contributes to the ADP binding site. Sn-glycerol 3-phosphate contacts are provided by Arg-82, Glu-83, Tyr-134, and Asp-249. Residues Arg-82, Glu-83, Tyr-134, Asp-249, and Gln-250 each contribute to the glycerol site. 2 residues coordinate ADP: Thr-271 and Gly-315. ATP contacts are provided by Thr-271, Gly-315, Gln-319, and Gly-416. Positions 416 and 420 each coordinate ADP.

The protein belongs to the FGGY kinase family.

It carries out the reaction glycerol + ATP = sn-glycerol 3-phosphate + ADP + H(+). The protein operates within polyol metabolism; glycerol degradation via glycerol kinase pathway; sn-glycerol 3-phosphate from glycerol: step 1/1. Inhibited by fructose 1,6-bisphosphate (FBP). Functionally, key enzyme in the regulation of glycerol uptake and metabolism. Catalyzes the phosphorylation of glycerol to yield sn-glycerol 3-phosphate. The polypeptide is Glycerol kinase 3 (Streptomyces avermitilis (strain ATCC 31267 / DSM 46492 / JCM 5070 / NBRC 14893 / NCIMB 12804 / NRRL 8165 / MA-4680)).